Reading from the N-terminus, the 215-residue chain is MESSNLYSKLLNAPKNTPVFLSQNLEADFIVKAYTFGLFPWTSKPVTWWCPDPRCVLNPNQIHIQKNMKKFINLYQIKLDYDFLKLITLCRDARSQSWIDDEFITTYYKLFTQGYAHSLELYENNELIGGIYGLILGKVFFGESMVNIKKNASKVAMIKLCDLLKPYDFIIDCQVYNQHLEFMGAHNISRKEFLNILKEKCNQESGFKNFKDLIT.

The protein belongs to the L/F-transferase family.

It localises to the cytoplasm. The enzyme catalyses N-terminal L-lysyl-[protein] + L-leucyl-tRNA(Leu) = N-terminal L-leucyl-L-lysyl-[protein] + tRNA(Leu) + H(+). It carries out the reaction N-terminal L-arginyl-[protein] + L-leucyl-tRNA(Leu) = N-terminal L-leucyl-L-arginyl-[protein] + tRNA(Leu) + H(+). The catalysed reaction is L-phenylalanyl-tRNA(Phe) + an N-terminal L-alpha-aminoacyl-[protein] = an N-terminal L-phenylalanyl-L-alpha-aminoacyl-[protein] + tRNA(Phe). Its function is as follows. Functions in the N-end rule pathway of protein degradation where it conjugates Leu, Phe and, less efficiently, Met from aminoacyl-tRNAs to the N-termini of proteins containing an N-terminal arginine or lysine. The protein is Leucyl/phenylalanyl-tRNA--protein transferase of Campylobacter jejuni subsp. doylei (strain ATCC BAA-1458 / RM4099 / 269.97).